Consider the following 347-residue polypeptide: Anthranilate phosphoribosyltransferase (347 aa).

5-phospho-alpha-D-ribose 1-diphosphate-binding positions include Gly-88, Gly-91–Asp-92, Thr-96, Asn-98–Thr-101, Lys-116–Ser-124, and Ser-128. Gly-88 serves as a coordination point for anthranilate. Ser-100 provides a ligand contact to Mg(2+). Position 119 (Asn-119) interacts with anthranilate. Residue Arg-174 coordinates anthranilate. Residues Asp-232 and Glu-233 each contribute to the Mg(2+) site.

The protein belongs to the anthranilate phosphoribosyltransferase family. Homodimer. Mg(2+) is required as a cofactor.

It carries out the reaction N-(5-phospho-beta-D-ribosyl)anthranilate + diphosphate = 5-phospho-alpha-D-ribose 1-diphosphate + anthranilate. The protein operates within amino-acid biosynthesis; L-tryptophan biosynthesis; L-tryptophan from chorismate: step 2/5. Functionally, catalyzes the transfer of the phosphoribosyl group of 5-phosphorylribose-1-pyrophosphate (PRPP) to anthranilate to yield N-(5'-phosphoribosyl)-anthranilate (PRA). The protein is Anthranilate phosphoribosyltransferase of Shewanella sp. (strain MR-4).